The primary structure comprises 573 residues: Hemagglutinin-neuraminidase (573 aa).

The Intravirion segment spans residues 1-27 (MQDSHGNTQILNQANSMVKRTWRLLFR). A helical transmembrane segment spans residues 28 to 48 (IATLILLVSIFVLSLIIVLQS). Topologically, residues 49-573 (TPGNLQNDIN…DFQITLFLAA (525 aa)) are virion surface. Intrachain disulfides connect Cys173-Cys197, Cys187-Cys248, and Cys239-Cys252. Residues 235 to 240 (NRKSCS) are involved in neuraminidase activity. N-linked (GlcNAc...) asparagine; by host glycans are attached at residues Asn258, Asn330, Asn339, and Asn347. 3 cysteine pairs are disulfide-bonded: Cys345/Cys466, Cys377/Cys387, and Cys460/Cys470. An N-linked (GlcNAc...) asparagine; by host glycan is attached at Asn433. 2 N-linked (GlcNAc...) asparagine; by host glycosylation sites follow: Asn502 and Asn530. Cys540 and Cys551 are disulfide-bonded.

This sequence belongs to the paramyxoviruses hemagglutinin-neuraminidase family. As to quaternary structure, homotetramer; composed of disulfide-linked homodimers. Interacts with F protein trimer.

Its subcellular location is the virion membrane. It localises to the host cell membrane. The catalysed reaction is Hydrolysis of alpha-(2-&gt;3)-, alpha-(2-&gt;6)-, alpha-(2-&gt;8)- glycosidic linkages of terminal sialic acid residues in oligosaccharides, glycoproteins, glycolipids, colominic acid and synthetic substrates.. Its function is as follows. Attaches the virus to sialic acid-containing cell receptors and thereby initiating infection. Binding of HN protein to the receptor induces a conformational change that allows the F protein to trigger virion/cell membranes fusion. In terms of biological role, neuraminidase activity ensures the efficient spread of the virus by dissociating the mature virions from the neuraminic acid containing glycoproteins. This chain is Hemagglutinin-neuraminidase (HN), found in Homo sapiens (Human).